A 441-amino-acid polypeptide reads, in one-letter code: Putative cytochrome P450 138 (441 aa).

Residue Cys388 coordinates heme.

This sequence belongs to the cytochrome P450 family. Heme is required as a cofactor.

This Mycobacterium bovis (strain ATCC BAA-935 / AF2122/97) protein is Putative cytochrome P450 138 (cyp138).